The chain runs to 380 residues: 1-deoxy-D-xylulose 5-phosphate reductoisomerase (380 aa).

8 residues coordinate NADPH: Ser10, Gly11, Ser12, Ile13, Gly36, Lys37, Asn38, and Asn120. Lys121 is a 1-deoxy-D-xylulose 5-phosphate binding site. Glu122 provides a ligand contact to NADPH. Asp146 is a Mn(2+) binding site. 4 residues coordinate 1-deoxy-D-xylulose 5-phosphate: Ser147, Glu148, Ser172, and His195. Glu148 contributes to the Mn(2+) binding site. Gly201 contacts NADPH. Residues Ser208, Asn213, Lys214, and Glu217 each coordinate 1-deoxy-D-xylulose 5-phosphate. A Mn(2+)-binding site is contributed by Glu217.

This sequence belongs to the DXR family. Mg(2+) is required as a cofactor. Requires Mn(2+) as cofactor.

The enzyme catalyses 2-C-methyl-D-erythritol 4-phosphate + NADP(+) = 1-deoxy-D-xylulose 5-phosphate + NADPH + H(+). Its pathway is isoprenoid biosynthesis; isopentenyl diphosphate biosynthesis via DXP pathway; isopentenyl diphosphate from 1-deoxy-D-xylulose 5-phosphate: step 1/6. Its function is as follows. Catalyzes the NADPH-dependent rearrangement and reduction of 1-deoxy-D-xylulose-5-phosphate (DXP) to 2-C-methyl-D-erythritol 4-phosphate (MEP). The chain is 1-deoxy-D-xylulose 5-phosphate reductoisomerase from Bacillus cereus (strain Q1).